The primary structure comprises 178 residues: Ribosome maturation factor RimP (178 aa).

The protein belongs to the RimP family.

The protein resides in the cytoplasm. Its function is as follows. Required for maturation of 30S ribosomal subunits. The protein is Ribosome maturation factor RimP of Streptococcus pyogenes serotype M4 (strain MGAS10750).